A 146-amino-acid polypeptide reads, in one-letter code: Large ribosomal subunit protein uL15 (146 aa).

Over residues 1 to 13 (MKLHELKAAEGSR) the composition is skewed to basic and acidic residues. The disordered stretch occupies residues 1–51 (MKLHELKAAEGSRKVRNRVGRGTSSGNGKTSGRGQKGQKARSGGGVRLGFE). Composition is skewed to gly residues over residues 23–35 (TSSGNGKTSGRGQ) and 42–51 (SGGGVRLGFE).

Belongs to the universal ribosomal protein uL15 family. As to quaternary structure, part of the 50S ribosomal subunit.

In terms of biological role, binds to the 23S rRNA. This chain is Large ribosomal subunit protein uL15, found in Streptococcus pyogenes serotype M1.